The primary structure comprises 211 residues: Protein G12 (211 aa).

Residues Met1–Cys19 form the signal peptide.

The polypeptide is Protein G12 (Anopheles gambiae (African malaria mosquito)).